A 332-amino-acid polypeptide reads, in one-letter code: 2,3-diketo-L-gulonate reductase (332 aa).

Histidine 44 (proton donor) is an active-site residue. NAD(+) contacts are provided by residues 168-174 (ITMVDMS), 224-225 (WK), and 304-306 (GHE).

Belongs to the LDH2/MDH2 oxidoreductase family. DlgD subfamily. As to quaternary structure, homodimer.

The protein localises to the cytoplasm. The catalysed reaction is 3-dehydro-L-gulonate + NAD(+) = 2,3-dioxo-L-gulonate + NADH + H(+). The enzyme catalyses 3-dehydro-L-gulonate + NADP(+) = 2,3-dioxo-L-gulonate + NADPH + H(+). Functionally, catalyzes the reduction of 2,3-diketo-L-gulonate in the presence of NADH, to form 3-keto-L-gulonate. In Escherichia coli O81 (strain ED1a), this protein is 2,3-diketo-L-gulonate reductase.